A 358-amino-acid chain; its full sequence is G-protein coupled receptor 87 (358 aa).

Over methionine 1–valine 47 the chain is Extracellular. N-linked (GlcNAc...) asparagine glycans are attached at residues asparagine 4, asparagine 24, and asparagine 33. A helical transmembrane segment spans residues leucine 48 to phenylalanine 68. Residues histidine 69–serine 75 lie on the Cytoplasmic side of the membrane. A helical transmembrane segment spans residues phenylalanine 76–phenylalanine 96. Over arginine 97–tyrosine 116 the chain is Extracellular. Cysteine 114 and cysteine 192 are disulfide-bonded. Residues threonine 117–valine 137 form a helical membrane-spanning segment. At aspartate 138 to lysine 159 the chain is on the cytoplasmic side. Residues valine 160 to threonine 180 form a helical membrane-spanning segment. Residues asparagine 181 to threonine 208 lie on the Extracellular side of the membrane. Residues tyrosine 209–isoleucine 229 form a helical membrane-spanning segment. Residues serine 230–valine 256 are Cytoplasmic-facing. The chain crosses the membrane as a helical span at residues valine 257–phenylalanine 277. The Extracellular portion of the chain corresponds to serine 278–glutamate 297. The chain crosses the membrane as a helical span at residues methionine 298–cysteine 318. Topologically, residues lysine 319–valine 358 are cytoplasmic.

It belongs to the G-protein coupled receptor 1 family. In terms of tissue distribution, expressed at high levels in testis and brain and to a lesser extent placenta, ovary, prostate, and skeletal muscle but not in heart, lung, kidney, liver or intestine.

Its subcellular location is the cell membrane. Functionally, receptor for lysophosphatidic acid (LPA). Necessary for p53/TP53-dependent survival in response to DNA damage. Promotes the Hippo-YAP signaling pathway and thereby modulates glycolysis and oxidative stress production by the regulation of hexokinase-2/HK2. The polypeptide is G-protein coupled receptor 87 (Gpr87) (Mus musculus (Mouse)).